The following is a 323-amino-acid chain: Large ribosomal subunit protein uL10 (323 aa).

The segment at 296–323 (AAPAAPSAAAKEEPEESDEDDFGMGGLF) is disordered. Over residues 308–317 (EPEESDEDDF) the composition is skewed to acidic residues.

The protein belongs to the universal ribosomal protein uL10 family. P0 forms a pentameric complex by interaction with dimers of P1 and P2. Post-translationally, phosphorylated.

Its function is as follows. Ribosomal protein P0 is the functional equivalent of E.coli protein L10. The polypeptide is Large ribosomal subunit protein uL10 (LIPO-A) (Leishmania infantum).